The sequence spans 507 residues: Histidine ammonia-lyase (507 aa).

The 5-imidazolinone (Ala-Gly) cross-link spans 142–144 (ASG). Serine 143 is modified (2,3-didehydroalanine (Ser)).

Belongs to the PAL/histidase family. Post-translationally, contains an active site 4-methylidene-imidazol-5-one (MIO), which is formed autocatalytically by cyclization and dehydration of residues Ala-Ser-Gly.

Its subcellular location is the cytoplasm. The enzyme catalyses L-histidine = trans-urocanate + NH4(+). The protein operates within amino-acid degradation; L-histidine degradation into L-glutamate; N-formimidoyl-L-glutamate from L-histidine: step 1/3. The sequence is that of Histidine ammonia-lyase from Symbiobacterium thermophilum (strain DSM 24528 / JCM 14929 / IAM 14863 / T).